Here is a 270-residue protein sequence, read N- to C-terminus: Cystinosin homolog (270 aa).

The PQ-loop 1 domain occupies 9-75 (LEISYEIVGW…LYFSPVIQKQ (67 aa)). The helical transmembrane segment at 14-34 (EIVGWIAFASWSISFYPQLIL) threads the bilayer. Asparagine 52 is a glycosylation site (N-linked (GlcNAc...) asparagine). A run of 3 helical transmembrane segments spans residues 93-113 (VAFSIHAVVMTAVTLFQIFIY), 123-143 (LAIGIVVVVWGFAAICFFIAL), and 148-168 (WLWLISIFNSIQVFMTCVKYI). The region spanning 151 to 213 (LISIFNSIQV…IQSIDQNSWK (63 aa)) is the PQ-loop 2 domain. N-linked (GlcNAc...) asparagine glycosylation is present at asparagine 174. Helical transmembrane passes span 180-200 (TVGWSIGNILLDFTGGLANYL) and 223-243 (LLSLISIFFDILFMFQHYVLY). Positions 250-270 (KSPETGEESNEPLIDSSHEHV) are disordered.

The protein belongs to the cystinosin (TC 2.A.43.1) family.

The protein resides in the lysosome membrane. In terms of biological role, thought to transport cystine out of lysosomes. The chain is Cystinosin homolog from Arabidopsis thaliana (Mouse-ear cress).